The following is a 529-amino-acid chain: Cytochrome P450 monooxygenase 136 (529 aa).

The helical transmembrane segment at 9–29 (SPLALAVLSIATCQLALVWWY) threads the bilayer. Residue Cys447 coordinates heme.

The protein belongs to the cytochrome P450 family. Requires heme as cofactor.

Its subcellular location is the membrane. It functions in the pathway secondary metabolite biosynthesis. Functionally, cytochrome P450 monooxygenase that is able to use delta(6)-protoilludene as a substrate to produce delta(6)-protoilludene-5-ol. This chain is Cytochrome P450 monooxygenase 136, found in Postia placenta (strain ATCC 44394 / Madison 698-R) (Brown rot fungus).